A 366-amino-acid polypeptide reads, in one-letter code: Putative integrase/recombinase HI_1572 (366 aa).

In terms of domain architecture, Core-binding (CB) spans 54–133; that stretch reads ITLDELIDKY…SLSALMAKTI (80 aa). Positions 168-331 constitute a Tyr recombinase domain; it reads IFVSGYDVEH…DMAEGYKTKA (164 aa). Residues arginine 201, lysine 226, and histidine 308 contribute to the active site. The O-(3'-phospho-DNA)-tyrosine intermediate role is filled by tyrosine 318.

It belongs to the 'phage' integrase family.

The chain is Putative integrase/recombinase HI_1572 from Haemophilus influenzae (strain ATCC 51907 / DSM 11121 / KW20 / Rd).